We begin with the raw amino-acid sequence, 323 residues long: Olfactory receptor 2T35 (323 aa).

The Extracellular segment spans residues 1–26; it reads MGMEGLLQNSTNFVLTGLITHPAFPG. Asparagine 9 carries an N-linked (GlcNAc...) asparagine glycan. The helical transmembrane segment at 27 to 50 threads the bilayer; that stretch reads LLFAVVFSIFVVAITANLVMILLI. Residues 51 to 58 are Cytoplasmic-facing; sequence HMDSRLHT. A helical transmembrane segment spans residues 59 to 80; the sequence is PMYFLLSQLSIMDTIYICITVP. The Extracellular portion of the chain corresponds to 81–101; that stretch reads KMLQDLLSKDKTISFLGCAVQ. Cysteine 98 and cysteine 189 are joined by a disulfide. A helical membrane pass occupies residues 102-120; sequence IFYLTLIGGEFFLLGLMAY. The Cytoplasmic segment spans residues 121–139; that stretch reads DRYVAVCNPLRYPLLMNRR. The helical transmembrane segment at 140–158 threads the bilayer; the sequence is VCLFMVVGSWVGGSLDGFM. Residues 159-195 lie on the Extracellular side of the membrane; it reads LTPVTMSFPFCRSREINHFFCEIPAVLKLSCTDTSLY. The helical transmembrane segment at 196 to 219 threads the bilayer; the sequence is ETLMYACCVLMLLIPLSVISVSYT. The Cytoplasmic portion of the chain corresponds to 220–236; that stretch reads HILLTVHRMNSAEGRRK. Residues 237–259 traverse the membrane as a helical segment; that stretch reads AFATCSSHIMVVSVFYGAAFYTN. At 260-272 the chain is on the extracellular side; the sequence is VLPHSYHTPEKDK. A helical membrane pass occupies residues 273–292; it reads VVSAFYTILTPMLNPLIYSL. Residues 293-323 are Cytoplasmic-facing; that stretch reads RNKDVAAALRKVLGRCGSSQSIRVATVIRKG.

Belongs to the G-protein coupled receptor 1 family.

Its subcellular location is the cell membrane. Functionally, odorant receptor. This Homo sapiens (Human) protein is Olfactory receptor 2T35 (OR2T35).